The sequence spans 1176 residues: MDNNPNINECIPYNCLSNPEVEVLGGERIETGYTPIDISLSLTQFLLSEFVPGAGFVLGLVDIIWGIFGPSQWDAFPVQIEQLINQRIEEFARNQAISRLEGLSNLYQIYAESFREWEADPTNPALREEMRIQFNDMNSALTTAIPLLAVQNYQVPLLSVYVQAANLHLSVLRDVSVFGQRWGFDAATINSRYNDLTRLIGNYTDYAVRWYNTGLERVWGPDSRDWVRYNQFRRELTLTVLDIVALFSNYDSRRYPIRTVSQLTREIYTNPVLENFDGSFRGMAQRIEQNIRQPHLMDILNSITIYTDVHRGFNYWSGHQITASPVGFSGPEFAFPLFGNAGNAAPPVLVSLTGLGIFRTLSSPLYRRIILGSGPNNQELFVLDGTEFSFASLTTNLPSTIYRQRGTVDSLDVIPPQDNSVPPRAGFSHRLSHVTMLSQAAGAVYTLRAPTFSWQHRSAEFNNIIPSSQITQIPLTKSTNLGSGTSVVKGPGFTGGDILRRTSPGQISTLRVNITAPLSQRYRVRIRYASTTNLQFHTSIDGRPINQGNFSATMSSGSNLQSGSFRTVGFTTPFNFSNGSSVFTLSAHVFNSGNEVYIDRIEFVPAEVTFEAEYDLERAQKAVNELFTSSNQIGLKTDVTDYHIDQVSNLVECLSDEFCLDEKQELSEKVKHAKRLSDERNLLQDPNFRGINRQLDRGWRGSTDITIQGGDDVFKENYVTLLGTFDECYPTYLYQKIDESKLKAYTRYQLRGYIEDSQDLEIYLIRYNAKHETVNVPGTGSLWPLSAQSPIGKCGEPNRCAPHLEWNPDLDCSCRDGEKCAHHSHHFSLDIDVGCTDLNEDLGVWVIFKIKTQDGHARLGNLEFLEEKPLVGEALARVKRAEKKWRDKREKLEWETNIVYKEAKESVDALFVNSQYDQLQADTNIAMIHAADKRVHSIREAYLPELSVIPGVNAAIFEELEGRIFTAFSLYDARNVIKNGDFNNGLSCWNVKGHVDVEEQNNQRSVLVVPEWEAEVSQEVRVCPGRGYILRVTAYKEGYGEGCVTIHEIENNTDELKFSNCVEEEIYPNNTVTCNDYTVNQEEYGGAYTSRNRGYNEAPSVPADYASVYEEKSYTDGRRENPCEFNRGYRDYTPLPVGYVTKELEYFPETDKVWIEIGETEGTFIVDSVELLLMEE.

The protein belongs to the delta endotoxin family.

Its function is as follows. Promotes colloidosmotic lysis by binding to the midgut epithelial cells of many lepidopteran larvae. The polypeptide is Pesticidal crystal protein Cry1Aa (cry1Aa) (Bacillus thuringiensis subsp. entomocidus).